Here is a 316-residue protein sequence, read N- to C-terminus: Ribosomal RNA small subunit methyltransferase H (316 aa).

S-adenosyl-L-methionine contacts are provided by residues 35–37 (AGH), D55, F84, D105, and Q112.

The protein belongs to the methyltransferase superfamily. RsmH family.

It is found in the cytoplasm. The catalysed reaction is cytidine(1402) in 16S rRNA + S-adenosyl-L-methionine = N(4)-methylcytidine(1402) in 16S rRNA + S-adenosyl-L-homocysteine + H(+). In terms of biological role, specifically methylates the N4 position of cytidine in position 1402 (C1402) of 16S rRNA. This is Ribosomal RNA small subunit methyltransferase H from Streptococcus pneumoniae (strain JJA).